A 197-amino-acid polypeptide reads, in one-letter code: UDP-N-acetylglucosamine transferase subunit ALG13 (197 aa).

It belongs to the glycosyltransferase 28 family. In terms of assembly, heterodimer with ALG14 to form a functional enzyme.

The protein resides in the endoplasmic reticulum. The catalysed reaction is an N-acetyl-alpha-D-glucosaminyl-diphospho-di-trans,poly-cis-dolichol + UDP-N-acetyl-alpha-D-glucosamine = an N,N'-diacetylchitobiosyl-diphospho-di-trans,poly-cis-dolichol + UDP + H(+). In terms of biological role, involved in protein N-glycosylation. Essential for the second step of the dolichol-linked oligosaccharide pathway. The sequence is that of UDP-N-acetylglucosamine transferase subunit ALG13 (ALG13) from Kluyveromyces lactis (strain ATCC 8585 / CBS 2359 / DSM 70799 / NBRC 1267 / NRRL Y-1140 / WM37) (Yeast).